A 672-amino-acid polypeptide reads, in one-letter code: uncharacterized protein (672 aa).

The first 24 residues, 1 to 24 (MKTLKVLKIFIIVYISSVSLESFA), serve as a signal peptide directing secretion. 2 consecutive transmembrane segments (helical) span residues 226-246 (IIGA…ALNK) and 254-274 (ITLF…LGPL). Positions 363–372 (SNGTSGNNKP) are enriched in polar residues. Positions 363–384 (SNGTSGNNKPIPNFDPDGKKDR) are disordered. Helical transmembrane passes span 410–430 (IILV…LYFI), 436–456 (CMVT…MVLF), 469–489 (VCIS…LLIT), and 562–582 (VVSI…FYYF). The span at 628–646 (HGKSSLGDKPDIGNKRKDG) shows a compositional bias: basic and acidic residues. The segment at 628 to 672 (HGKSSLGDKPDIGNKRKDGAQQGEDAVNSSGGEVADLASGSGGGK) is disordered.

Belongs to the TrbL/VirB6 family.

The protein resides in the cell membrane. This is an uncharacterized protein from Rickettsia prowazekii (strain Madrid E).